We begin with the raw amino-acid sequence, 146 residues long: Hemoglobin subunit beta (146 aa).

The residue at position 1 (valine 1) is an N-acetylvaline. The Globin domain maps to 2 to 146 (HLTGEEKSAV…VATALAHKYH (145 aa)). Position 12 is a phosphothreonine (threonine 12). Position 44 is a phosphoserine (serine 44). Histidine 63 contributes to the heme b binding site. Lysine 82 carries the post-translational modification N6-acetyllysine. Histidine 92 is a heme b binding site. The residue at position 93 (cysteine 93) is an S-nitrosocysteine. Lysine 144 bears the N6-acetyllysine mark.

Belongs to the globin family. In terms of assembly, heterotetramer of two alpha chains and two beta chains. Red blood cells.

Involved in oxygen transport from the lung to the various peripheral tissues. This chain is Hemoglobin subunit beta (HBB), found in Tursiops truncatus (Atlantic bottle-nosed dolphin).